The chain runs to 1377 residues: Carboxypeptidase D (1377 aa).

A signal peptide spans 1 to 37 (MASGRDERPPWRLGRLRLLPPPPLLLLLLLLRSSAQA). Residues 38–1296 (AHIKKAEATT…DNRIFGLPRE (1259 aa)) lie on the Extracellular side of the membrane. Residues 62 to 379 (HYYHEAALGE…ESLITLIEKV (318 aa)) enclose the Peptidase M14 1 domain. Residues H138 and E141 each contribute to the Zn(2+) site. Residues 161-163 (RGD) carry the Cell attachment site motif. 2 N-linked (GlcNAc...) asparagine glycosylation sites follow: N171 and N216. The segment at 188 to 231 (RAREGDCGLGDSGPPGTSGRDNSRGRDLNRSFPDQFSTGEPPSL) is disordered. H256 is a Zn(2+) binding site. Y264 is modified (phosphotyrosine). Residue S269 is modified to Phosphoserine. E349 (proton donor/acceptor) is an active-site residue. 4 N-linked (GlcNAc...) asparagine glycosylation sites follow: N398, N409, N428, and N521. A Peptidase M14 2 domain is found at 501–791 (HHHHFPDMEI…RSLIQFMKQV (291 aa)). 2 residues coordinate Zn(2+): H563 and E566. N625 is a glycosylation site (N-linked (GlcNAc...) asparagine). A Zn(2+)-binding site is contributed by H670. E761 functions as the Proton donor/acceptor in the catalytic mechanism. 6 N-linked (GlcNAc...) asparagine glycosylation sites follow: N810, N854, N866, N878, N952, and N975. The interval 874–898 (ADANNESKKGRGHSTSTDDTSDPTS) is disordered. A Peptidase M14 3 domain is found at 929–1208 (RYHSYKDLSE…KSLLSMLVEV (280 aa)). Residues 1038–1047 (RERAQEKDCT) are compositionally biased toward basic and acidic residues. The segment at 1038 to 1064 (RERAQEKDCTSKTGHTNAHGKDLDTDF) is disordered. N-linked (GlcNAc...) asparagine glycans are attached at residues N1067 and N1139. The helical transmembrane segment at 1297–1317 (LVVTVSGATMSALILTACIIW) threads the bilayer. Residues C1314, C1318, and C1320 are each lipidated (S-palmitoyl cysteine). Residues 1318–1377 (CICSIKSNRHKDGFHRLRQHHDEYEDEIRMMSTGSKKSLLSHEFQDETDTEEETLYSSKH) lie on the Cytoplasmic side of the membrane. A phosphoserine mark is found at S1355 and S1358. The interval 1356 to 1377 (LLSHEFQDETDTEEETLYSSKH) is disordered. A phosphothreonine mark is found at T1365 and T1367.

The protein belongs to the peptidase M14 family. The cofactor is Zn(2+).

The protein localises to the cell membrane. It catalyses the reaction Releases C-terminal Arg and Lys from polypeptides.. This is Carboxypeptidase D (Cpd) from Mus musculus (Mouse).